The following is a 504-amino-acid chain: Probable ergothioneine transporter EgtUBC (504 aa).

The 180-residue stretch at 19 to 198 folds into the ABC transmembrane type-1 domain; sequence MIEHIQISFI…LLAIIFDLIL (180 aa). 6 helical membrane-spanning segments follow: residues 25–45, 49–69, 70–90, 145–165, 178–198, and 209–229; these read ISFI…ILLT, TISE…SLAL, LGLM…ALVV, AMVL…GGLG, SLIL…DLIL, and LLMT…IPMF. Residues 231-504 form an ergothioneine binding domain region; the sequence is QKGDKITLAG…DYLKAKGLIK (274 aa).

It in the N-terminal section; belongs to the binding-protein-dependent transport system permease family. This sequence in the C-terminal section; belongs to the OsmX family. As to quaternary structure, the complex is probably composed of at least an ATP-binding protein (EgtUA) and a transmembrane protein (EgtUBC).

It is found in the membrane. In terms of biological role, part of an ABC transporter complex EgtU required for the uptake of ergothioneine (EGT), a natural low-molecular weight (LMW) thiol antioxidant. Responsible for the translocation of the substrate across the membrane. Also contains a C-terminal periplasmic solute-binding domain (SBD) which binds to EGT with sub-micromolar affinity. Probably does not bind L-hercynine. The sequence is that of Probable ergothioneine transporter EgtUBC (egtUBC) from Staphylococcus aureus (strain USA300).